Here is a 234-residue protein sequence, read N- to C-terminus: Purine nucleoside phosphorylase DeoD-type (234 aa).

H5 is an a purine D-ribonucleoside binding site. Residues G21, R25, R44, and 88–91 (RIGT) each bind phosphate. A purine D-ribonucleoside is bound by residues 180-182 (DME) and 204-205 (SD). D205 functions as the Proton donor in the catalytic mechanism.

The protein belongs to the PNP/UDP phosphorylase family. Homohexamer; trimer of homodimers.

It carries out the reaction a purine D-ribonucleoside + phosphate = a purine nucleobase + alpha-D-ribose 1-phosphate. It catalyses the reaction a purine 2'-deoxy-D-ribonucleoside + phosphate = a purine nucleobase + 2-deoxy-alpha-D-ribose 1-phosphate. Functionally, catalyzes the reversible phosphorolytic breakdown of the N-glycosidic bond in the beta-(deoxy)ribonucleoside molecules, with the formation of the corresponding free purine bases and pentose-1-phosphate. In Buchnera aphidicola subsp. Acyrthosiphon pisum (strain 5A), this protein is Purine nucleoside phosphorylase DeoD-type.